We begin with the raw amino-acid sequence, 119 residues long: MITKIDKNKVRKKRHARVRSKISGTESRPRLNVFRSNKNIYAQVIDDVNGVTLASASNLDKDFGSAESKVDAASKVGELVAKRASEKGITSVTFDRGGYLYHGRVKALAEAARENGLEF.

Residues 1 to 25 form a disordered region; the sequence is MITKIDKNKVRKKRHARVRSKISGT. A compositionally biased stretch (basic residues) spans 9–20; that stretch reads KVRKKRHARVRS.

This sequence belongs to the universal ribosomal protein uL18 family. In terms of assembly, part of the 50S ribosomal subunit; part of the 5S rRNA/L5/L18/L25 subcomplex. Contacts the 5S and 23S rRNAs.

Functionally, this is one of the proteins that bind and probably mediate the attachment of the 5S RNA into the large ribosomal subunit, where it forms part of the central protuberance. This Listeria innocua serovar 6a (strain ATCC BAA-680 / CLIP 11262) protein is Large ribosomal subunit protein uL18.